Here is a 473-residue protein sequence, read N- to C-terminus: MKQLEKITPRDVDFSQWYTDTVINAKLASYGPVKGTIIFRPYGYAIWELIQKYLDAKFKELEVQNVYFPLLIPQSLFQKEKDHIEGFSPEIATVTRVGDTPLPEPLFIRPTSEVLMANFFKNEVKSYRDLPLIFNQWTNVMRWEKTTRPFLRTSEFLWQEGHTVHSERKEASDLTLKILDTYTEFAQNALLLPVIPGKKTEKEKFAGADSTYTIESLMHDGQALQCGTSHYFADNFSKPYEIKFQNKEGKLEHAYSTSWGVSTRLIGAIIMTHSDDNGLVLPSMVSPVQVRLIQIKETDEVIKVTEDIKEALKNKYRVDIDKTDKSFGFKISEAEIKGIPLRIEIGPRDLENNQVTISRRDTREKIQVNVNEVTNIVDQMIKEYDANLYAKALKNREERTSRANSIEEYKNILAQNQGFVLVPFCGEIECEDDVKKQTSTNSRCIPFDQDNKTEKCFNCNKDTTLKVYFARAY.

The protein belongs to the class-II aminoacyl-tRNA synthetase family. ProS type 3 subfamily. In terms of assembly, homodimer.

The protein resides in the cytoplasm. It catalyses the reaction tRNA(Pro) + L-proline + ATP = L-prolyl-tRNA(Pro) + AMP + diphosphate. Its function is as follows. Catalyzes the attachment of proline to tRNA(Pro) in a two-step reaction: proline is first activated by ATP to form Pro-AMP and then transferred to the acceptor end of tRNA(Pro). This chain is Proline--tRNA ligase, found in Mesoplasma florum (strain ATCC 33453 / NBRC 100688 / NCTC 11704 / L1) (Acholeplasma florum).